Reading from the N-terminus, the 414-residue chain is DNA polymerase IV 1 (414 aa).

A UmuC domain is found at 8-189; the sequence is IFHIDMNSFY…LPVGEMHGVG (182 aa). 2 residues coordinate Mg(2+): Asp12 and Asp108. Glu109 is a catalytic residue. The disordered stretch occupies residues 391 to 414; the sequence is LKKEESKTKGTSFNKDFFQDEKKS.

Belongs to the DNA polymerase type-Y family. Monomer. Mg(2+) serves as cofactor.

It localises to the cytoplasm. The catalysed reaction is DNA(n) + a 2'-deoxyribonucleoside 5'-triphosphate = DNA(n+1) + diphosphate. In terms of biological role, poorly processive, error-prone DNA polymerase involved in untargeted mutagenesis. Copies undamaged DNA at stalled replication forks, which arise in vivo from mismatched or misaligned primer ends. These misaligned primers can be extended by PolIV. Exhibits no 3'-5' exonuclease (proofreading) activity. May be involved in translesion synthesis (TSL), in conjunction with the beta clamp from PolIII. The chain is DNA polymerase IV 1 (dinB1) from Bacillus subtilis (strain 168).